The sequence spans 175 residues: Adenine phosphoribosyltransferase (175 aa).

It belongs to the purine/pyrimidine phosphoribosyltransferase family. As to quaternary structure, homodimer.

The protein localises to the cytoplasm. The catalysed reaction is AMP + diphosphate = 5-phospho-alpha-D-ribose 1-diphosphate + adenine. It participates in purine metabolism; AMP biosynthesis via salvage pathway; AMP from adenine: step 1/1. Its function is as follows. Catalyzes a salvage reaction resulting in the formation of AMP, that is energically less costly than de novo synthesis. The polypeptide is Adenine phosphoribosyltransferase (Caldicellulosiruptor bescii (strain ATCC BAA-1888 / DSM 6725 / KCTC 15123 / Z-1320) (Anaerocellum thermophilum)).